Consider the following 616-residue polypeptide: Chaperone protein HscA (616 aa).

This sequence belongs to the heat shock protein 70 family.

Functionally, chaperone involved in the maturation of iron-sulfur cluster-containing proteins. Has a low intrinsic ATPase activity which is markedly stimulated by HscB. Involved in the maturation of IscU. This is Chaperone protein HscA from Salmonella enteritidis PT4 (strain P125109).